Here is a 368-residue protein sequence, read N- to C-terminus: 3-dehydroquinate synthase (368 aa).

NAD(+) contacts are provided by residues 69 to 74 (DGEAYK), 103 to 107 (GVIGD), 127 to 128 (TT), lysine 140, and lysine 149. Glutamate 182, histidine 245, and histidine 262 together coordinate Zn(2+).

Belongs to the sugar phosphate cyclases superfamily. Dehydroquinate synthase family. Requires Co(2+) as cofactor. It depends on Zn(2+) as a cofactor. NAD(+) is required as a cofactor.

Its subcellular location is the cytoplasm. It carries out the reaction 7-phospho-2-dehydro-3-deoxy-D-arabino-heptonate = 3-dehydroquinate + phosphate. The protein operates within metabolic intermediate biosynthesis; chorismate biosynthesis; chorismate from D-erythrose 4-phosphate and phosphoenolpyruvate: step 2/7. In terms of biological role, catalyzes the conversion of 3-deoxy-D-arabino-heptulosonate 7-phosphate (DAHP) to dehydroquinate (DHQ). In Pseudomonas aeruginosa (strain UCBPP-PA14), this protein is 3-dehydroquinate synthase.